The primary structure comprises 463 residues: Paraneoplastic antigen Ma3 (463 aa).

The segment at 363–410 (VGAVPLPASGNSFDARPSQGYRRRRGRGQHRRGGVARAGSRGSRKRKR) is disordered. The span at 383–396 (YRRRRGRGQHRRGG) shows a compositional bias: basic residues. The segment at 412 to 429 (TFCYSCGEDGHIRVQCIN) adopts a CCHC-type zinc-finger fold. Residues 440–463 (KQAAVESGNGNWAWDKSHPKSKAK) form a disordered region.

Belongs to the PNMA family. In terms of tissue distribution, expressed at high levels in the brain and testis. Expressed at lower levels in the heart, trachea and kidney.

It localises to the nucleus. The protein resides in the nucleolus. The protein is Paraneoplastic antigen Ma3 (PNMA3) of Homo sapiens (Human).